The following is a 1005-amino-acid chain: Probable beta-galactosidase A (1005 aa).

A signal peptide spans 1–18 (MKLLSVAAVALLAAQAAG). Substrate contacts are provided by Y96, N140, A141, and E142. A glycan (N-linked (GlcNAc...) asparagine) is linked at N156. N199 contacts substrate. Catalysis depends on E200, which acts as the Proton donor. C205 and C206 are disulfide-bonded. Y260 is a substrate binding site. A disulfide bond links C266 and C315. E298 functions as the Nucleophile in the catalytic mechanism. Y364 is a binding site for substrate. N-linked (GlcNAc...) asparagine glycans are attached at residues N373, N402, N453, N478, N522, N622, N760, N777, N805, and N914.

It belongs to the glycosyl hydrolase 35 family.

The protein localises to the secreted. It carries out the reaction Hydrolysis of terminal non-reducing beta-D-galactose residues in beta-D-galactosides.. Its function is as follows. Cleaves beta-linked terminal galactosyl residues from gangliosides, glycoproteins, and glycosaminoglycans. This is Probable beta-galactosidase A (lacA) from Aspergillus flavus (strain ATCC 200026 / FGSC A1120 / IAM 13836 / NRRL 3357 / JCM 12722 / SRRC 167).